Consider the following 688-residue polypeptide: Acyl-CoA synthetase short-chain family member B, mitochondrial (688 aa).

It belongs to the ATP-dependent AMP-binding enzyme family.

It localises to the mitochondrion. The catalysed reaction is acetate + ATP + CoA = acetyl-CoA + AMP + diphosphate. In terms of biological role, activates acetate so that it can be used for lipid synthesis or for energy generation. This is Acyl-CoA synthetase short-chain family member B, mitochondrial (aslB) from Dictyostelium discoideum (Social amoeba).